A 378-amino-acid polypeptide reads, in one-letter code: Anhydro-N-acetylmuramic acid kinase (378 aa).

Position 9 to 16 (9 to 16) interacts with ATP; it reads GTSVDGID.

Belongs to the anhydro-N-acetylmuramic acid kinase family.

The catalysed reaction is 1,6-anhydro-N-acetyl-beta-muramate + ATP + H2O = N-acetyl-D-muramate 6-phosphate + ADP + H(+). Its pathway is amino-sugar metabolism; 1,6-anhydro-N-acetylmuramate degradation. It participates in cell wall biogenesis; peptidoglycan recycling. Catalyzes the specific phosphorylation of 1,6-anhydro-N-acetylmuramic acid (anhMurNAc) with the simultaneous cleavage of the 1,6-anhydro ring, generating MurNAc-6-P. Is required for the utilization of anhMurNAc either imported from the medium or derived from its own cell wall murein, and thus plays a role in cell wall recycling. This is Anhydro-N-acetylmuramic acid kinase from Microcystis aeruginosa (strain NIES-843 / IAM M-2473).